Consider the following 385-residue polypeptide: Multidrug export protein AcrE (385 aa).

The N-terminal stretch at 1–23 (MTKHARFFLLPSFILISAALIAG) is a signal peptide. Cys24 carries N-palmitoyl cysteine lipidation. Residue Cys24 is the site of S-diacylglycerol cysteine attachment. The tract at residues 366-385 (ARPGEQVKATTDTPADTASK) is disordered. Positions 373 to 385 (KATTDTPADTASK) are enriched in polar residues.

Belongs to the membrane fusion protein (MFP) (TC 8.A.1) family. As to quaternary structure, part of the tripartite efflux system AcrEF-TolC, which is composed of an inner membrane transporter, AcrF, a periplasmic membrane fusion protein, AcrE, and an outer membrane component, TolC. The complex forms a large protein conduit and can translocate molecules across both the inner and outer membranes.

It localises to the cell inner membrane. In terms of biological role, part of the tripartite efflux system AcrEF-TolC. Involved in the efflux of indole and organic solvents. The chain is Multidrug export protein AcrE (acrE) from Escherichia coli (strain K12).